The sequence spans 584 residues: MLSRVCPTLRYNRIWSAHAREMPRATLLLLQPNFFHSSPKTALVNRLDVTSSEFSSMFRRSFHALRSTVGDWRKLPKPPGQVFAERREYRKIRRRAPKKKQELELSVSICIEEQLPDDLEIQNIAEMLRLNVPMAMTLAFNGLKDSKYKTRETDIEDLGGYETVELSVMLCNDDFICKLNKEWRGEDHATDVLSMSQHVPELKLPVLMMGDLVISVETAARQAAERGHTLLDEIRILVIHGLLHLLGFDHEISDEAEQEMEEEEELLLKNLGWKGKGLIQSAYDIQKTTTVQPEKSDDRKEGDGLRLYKPKFSYIFCDMDGTLLNSKSQISEANAKALKEALLRGLKVVIATGKSRPGAIRILKTADLTGSDGIISESSPGVFVQGLLVYGRQGKEVYRGNLDRDVCRETCLYSLEHRIPLIAFSQDRCLTLFDHPLVDSLHTIYNEPKAEIISSVDQLIAEADIQKVIFMDTTEGVSSVIRPYWSEATGDRANVVQAQSDMLEIVPPGTSKGNGVKMLLNHLGVSPDEIMAIGDGENDIEMLQLASLGVALSNGAEKTKAVADVIGVSNDQDGVADAIYRYAF.

The N-terminal 50 residues, 1-50, are a transit peptide targeting the chloroplast; the sequence is MLSRVCPTLRYNRIWSAHAREMPRATLLLLQPNFFHSSPKTALVNRLDVT. The Zn(2+) site is built by His-240, His-244, and His-250.

Belongs to the endoribonuclease YbeY family. The cofactor is Zn(2+).

Its subcellular location is the plastid. The protein localises to the chloroplast stroma. In terms of biological role, endoribonuclease required for chloroplast ribosomal RNA (rRNA) processing and essential for normal growth and development. May be involved in maturation of both the 5' and 3' ends of 16S, 23S, and 4.5S rRNAs. Cleaves chloroplast rRNAs, mRNAs and tRNAs in vitro. The polypeptide is Endoribonuclease YBEY, chloroplastic (Arabidopsis thaliana (Mouse-ear cress)).